Consider the following 236-residue polypeptide: Putative (5-formylfuran-3-yl)methyl phosphate synthase (236 aa).

Catalysis depends on Lys-38, which acts as the Schiff-base intermediate with substrate. Catalysis depends on Lys-94, which acts as the Proton acceptor.

Belongs to the MfnB family.

It catalyses the reaction 2 D-glyceraldehyde 3-phosphate = 4-(hydroxymethyl)-2-furancarboxaldehyde phosphate + phosphate + 2 H2O. Functionally, catalyzes the formation of 4-(hydroxymethyl)-2-furancarboxaldehyde phosphate (4-HFC-P) from two molecules of glyceraldehyde-3-P (GA-3-P). This Methylorubrum extorquens (Methylobacterium dichloromethanicum) protein is Putative (5-formylfuran-3-yl)methyl phosphate synthase.